The following is a 314-amino-acid chain: ATP synthase gamma chain (314 aa).

It belongs to the ATPase gamma chain family. F-type ATPases have 2 components, CF(1) - the catalytic core - and CF(0) - the membrane proton channel. CF(1) has five subunits: alpha(3), beta(3), gamma(1), delta(1), epsilon(1). CF(0) has three main subunits: a, b and c.

Its subcellular location is the cellular thylakoid membrane. Its function is as follows. Produces ATP from ADP in the presence of a proton gradient across the membrane. The gamma chain is believed to be important in regulating ATPase activity and the flow of protons through the CF(0) complex. The protein is ATP synthase gamma chain of Synechococcus sp. (strain JA-3-3Ab) (Cyanobacteria bacterium Yellowstone A-Prime).